Here is a 503-residue protein sequence, read N- to C-terminus: Na(+)-translocating NADH-quinone reductase subunit B (503 aa).

Helical transmembrane passes span 55 to 75 (MMLV…NSGL), 120 to 142 (IFLP…FAII), and 160 to 180 (LILP…FGVV). Thr-248 is modified (FMN phosphoryl threonine). 5 helical membrane passes run 361–381 (TSTV…IASW), 384–404 (MLSF…MSIL), 417–437 (FFIP…LVFM), 452–472 (WLYG…NPAY), and 475–495 (GVML…NIAL).

Belongs to the NqrB/RnfD family. Composed of six subunits; NqrA, NqrB, NqrC, NqrD, NqrE and NqrF. Requires FMN as cofactor.

The protein localises to the cell inner membrane. It carries out the reaction a ubiquinone + n Na(+)(in) + NADH + H(+) = a ubiquinol + n Na(+)(out) + NAD(+). Its function is as follows. NQR complex catalyzes the reduction of ubiquinone-1 to ubiquinol by two successive reactions, coupled with the transport of Na(+) ions from the cytoplasm to the periplasm. NqrA to NqrE are probably involved in the second step, the conversion of ubisemiquinone to ubiquinol. This chain is Na(+)-translocating NADH-quinone reductase subunit B, found in Chlamydia trachomatis serovar A (strain ATCC VR-571B / DSM 19440 / HAR-13).